Consider the following 556-residue polypeptide: Protein F37C4.5 (556 aa).

Position 2 is an N-acetylalanine (A2).

The sequence is that of Protein F37C4.5 from Caenorhabditis elegans.